The primary structure comprises 204 residues: Large ribosomal subunit protein eL15 (204 aa).

The protein belongs to the eukaryotic ribosomal protein eL15 family. As to quaternary structure, component of the large ribosomal subunit.

The protein localises to the cytoplasm. In terms of biological role, component of the large ribosomal subunit. The ribosome is a large ribonucleoprotein complex responsible for the synthesis of proteins in the cell. The protein is Large ribosomal subunit protein eL15 (rpl15) of Silurus meridionalis (Southern catfish).